We begin with the raw amino-acid sequence, 96 residues long: Phosphoribosyl-ATP pyrophosphatase (96 aa).

The protein belongs to the PRA-PH family.

It localises to the cytoplasm. The catalysed reaction is 1-(5-phospho-beta-D-ribosyl)-ATP + H2O = 1-(5-phospho-beta-D-ribosyl)-5'-AMP + diphosphate + H(+). It participates in amino-acid biosynthesis; L-histidine biosynthesis; L-histidine from 5-phospho-alpha-D-ribose 1-diphosphate: step 2/9. This Methanococcus maripaludis (strain C5 / ATCC BAA-1333) protein is Phosphoribosyl-ATP pyrophosphatase.